The sequence spans 252 residues: Ubiquitin carboxyl-terminal hydrolase isozyme L1 (252 aa).

M1 carries the N-acetylmethionine modification. Residues 2–250 (QLKPMEINPE…VRFSAVALCK (249 aa)) enclose the UCH catalytic domain. The tract at residues 5–10 (PMEINP) is interaction with ubiquitin. C119 functions as the Nucleophile in the catalytic mechanism. At S154 the chain carries Phosphoserine. H190 functions as the Proton donor in the catalytic mechanism. The interaction with ubiquitin stretch occupies residues 240 to 245 (EVRFSA). The S-farnesyl cysteine moiety is linked to residue C249. The propeptide at 250 to 252 (KAA) is removed in mature form.

It belongs to the peptidase C12 family. As to quaternary structure, monomer. Homodimer. Interacts with COPS5 and SNCA. O-glycosylated. In terms of tissue distribution, neurons and cells of the diffuse neuroendocrine system and their tumors.

The protein resides in the cytoplasm. It localises to the endoplasmic reticulum membrane. It carries out the reaction Thiol-dependent hydrolysis of ester, thioester, amide, peptide and isopeptide bonds formed by the C-terminal Gly of ubiquitin (a 76-residue protein attached to proteins as an intracellular targeting signal).. Functionally, ubiquitin-protein hydrolase involved both in the processing of ubiquitin precursors and of ubiquitinated proteins. This enzyme is a thiol protease that recognizes and hydrolyzes a peptide bond at the C-terminal glycine of ubiquitin. Also binds to free monoubiquitin and may prevent its degradation in lysosomes. The homodimer may have ATP-independent ubiquitin ligase activity. This is Ubiquitin carboxyl-terminal hydrolase isozyme L1 (UCHL1) from Bos taurus (Bovine).